A 346-amino-acid polypeptide reads, in one-letter code: N-acetyl-gamma-glutamyl-phosphate reductase (346 aa).

Residue Cys151 is part of the active site.

Belongs to the NAGSA dehydrogenase family. Type 1 subfamily.

Its subcellular location is the cytoplasm. It catalyses the reaction N-acetyl-L-glutamate 5-semialdehyde + phosphate + NADP(+) = N-acetyl-L-glutamyl 5-phosphate + NADPH + H(+). It functions in the pathway amino-acid biosynthesis; L-arginine biosynthesis; N(2)-acetyl-L-ornithine from L-glutamate: step 3/4. Functionally, catalyzes the NADPH-dependent reduction of N-acetyl-5-glutamyl phosphate to yield N-acetyl-L-glutamate 5-semialdehyde. This Ehrlichia canis (strain Jake) protein is N-acetyl-gamma-glutamyl-phosphate reductase.